We begin with the raw amino-acid sequence, 77 residues long: U14-theraphotoxin-Cg1b (77 aa).

The signal sequence occupies residues 1–21; it reads MKTSVLLVILGIAAITVQCTA. The propeptide occupies 22–49; that stretch reads SESVEQDSLRTFVDAVLGWNAEMASEAR. 3 cysteine pairs are disulfide-bonded: Cys50–Cys64, Cys57–Cys69, and Cys63–Cys75.

The protein belongs to the neurotoxin 10 (Hwtx-1) family. 65 (Jztx-21) subfamily. Expressed by the venom gland.

The protein resides in the secreted. In terms of biological role, probable ion channel inhibitor. This is U14-theraphotoxin-Cg1b from Chilobrachys guangxiensis (Chinese earth tiger tarantula).